The chain runs to 229 residues: PKHD-type hydroxylase BBta_1313 (229 aa).

The region spanning 78 to 180 is the Fe2OG dioxygenase domain; the sequence is HIFPPLFNRY…RIASFFWLQS (103 aa). Residues histidine 98, aspartate 100, and histidine 161 each coordinate Fe cation. Arginine 171 lines the 2-oxoglutarate pocket.

It depends on Fe(2+) as a cofactor. The cofactor is L-ascorbate.

The chain is PKHD-type hydroxylase BBta_1313 from Bradyrhizobium sp. (strain BTAi1 / ATCC BAA-1182).